The chain runs to 69 residues: Cell division protein CrgA (69 aa).

A run of 2 helical transmembrane segments spans residues 14 to 34 and 45 to 65; these read VWFPTIMFGLMGTGAVWMVLF and AVGTWNILIAFGIIMAGFAMM.

The protein belongs to the CrgA family.

The protein localises to the cell membrane. Functionally, involved in cell division. In Tropheryma whipplei (strain TW08/27) (Whipple's bacillus), this protein is Cell division protein CrgA.